We begin with the raw amino-acid sequence, 246 residues long: tRNA (guanine-N(1)-)-methyltransferase (246 aa).

S-adenosyl-L-methionine-binding positions include Gly-113 and 133–138 (IGDYVL).

The protein belongs to the RNA methyltransferase TrmD family. In terms of assembly, homodimer.

It is found in the cytoplasm. The catalysed reaction is guanosine(37) in tRNA + S-adenosyl-L-methionine = N(1)-methylguanosine(37) in tRNA + S-adenosyl-L-homocysteine + H(+). Functionally, specifically methylates guanosine-37 in various tRNAs. This chain is tRNA (guanine-N(1)-)-methyltransferase, found in Haemophilus influenzae (strain PittGG).